A 432-amino-acid chain; its full sequence is Tol-Pal system protein TolB (432 aa).

An N-terminal signal peptide occupies residues 1–24 (MKLVTRMWSILIVFFLAVLQPAQA).

Belongs to the TolB family. In terms of assembly, the Tol-Pal system is composed of five core proteins: the inner membrane proteins TolA, TolQ and TolR, the periplasmic protein TolB and the outer membrane protein Pal. They form a network linking the inner and outer membranes and the peptidoglycan layer.

The protein resides in the periplasm. Part of the Tol-Pal system, which plays a role in outer membrane invagination during cell division and is important for maintaining outer membrane integrity. The polypeptide is Tol-Pal system protein TolB (Pasteurella multocida (strain Pm70)).